We begin with the raw amino-acid sequence, 432 residues long: Amino-acid acetyltransferase (432 aa).

The region spanning 286-425 (EQLREAGIED…ASLYNFQRNS (140 aa)) is the N-acetyltransferase domain.

This sequence belongs to the acetyltransferase family. ArgA subfamily.

The protein localises to the cytoplasm. It catalyses the reaction L-glutamate + acetyl-CoA = N-acetyl-L-glutamate + CoA + H(+). Its pathway is amino-acid biosynthesis; L-arginine biosynthesis; N(2)-acetyl-L-ornithine from L-glutamate: step 1/4. This chain is Amino-acid acetyltransferase, found in Pseudomonas paraeruginosa (strain DSM 24068 / PA7) (Pseudomonas aeruginosa (strain PA7)).